The primary structure comprises 744 residues: Junctophilin-3 (744 aa).

At 1-723 the chain is on the cytoplasmic side; it reads MSSGGRFNFD…LKSSTGSAPI (723 aa). MORN repeat units follow at residues 15–37, 39–60, 61–82, 83–105, 107–129, and 130–152; these read YCGG…KGQG, YTGS…SGNT, YQGT…GKWV, YKGE…GNGA, YEGT…DGGT, and YQGQ…PYGM. Positions 230 to 252 are disordered; that stretch reads SKSSLASQRSKQSSFRSEAGMST. A compositionally biased stretch (low complexity) spans 231–244; sequence KSSLASQRSKQSSF. MORN repeat units follow at residues 288-310 and 311-333; these read YVGE…DGLK and YEGE…DGTK. A Phosphoserine modification is found at serine 440. A Phosphothreonine modification is found at threonine 451. 2 disordered regions span residues 451-603 and 624-677; these read TPLQ…LLEP and CPQD…ESLR. Serine 457 carries the post-translational modification Phosphoserine. Threonine 471 is modified (phosphothreonine). Serine 475 and serine 506 each carry phosphoserine. Serine 699 and serine 706 each carry phosphoserine. A helical; Anchor for type IV membrane protein transmembrane segment spans residues 724-744; that stretch reads LVVMVILLNIGVAILFINFFI.

Belongs to the junctophilin family. Specifically expressed in brain. Highest levels in the olfactory tubercle, caudate putamen, nucleus accumbens, hippocampal formation, piriform cortex and cerebellar cortex. Expressed in disctete neurons sites. In hippocampal formation, expressed in dendrites of hippocampal pyramidal and denate granule cells. In cerebellum, it is highly expressed in Purkinge cells, while it is weakly expressed in granular cells.

It localises to the cell membrane. It is found in the endoplasmic reticulum membrane. In terms of biological role, junctophilins contribute to the formation of junctional membrane complexes (JMCs) which link the plasma membrane with the endoplasmic or sarcoplasmic reticulum in excitable cells. Provides a structural foundation for functional cross-talk between the cell surface and intracellular calcium release channels. JPH3 is brain-specific and appears to have an active role in certain neurons involved in motor coordination and memory. This chain is Junctophilin-3 (Jph3), found in Mus musculus (Mouse).